We begin with the raw amino-acid sequence, 278 residues long: MTVLHSVDFFPSGNASVAIEPRLPQADFPEHHHDFHEIVIVEHGTGIHVFNGQPYTITGGTVCFVRDHDRHLYEHTDNLCLTNVLYRSPDRFQFLAGLNQLLPQEQDGQYPSHWRVNHSVLQQVRQLVAQMEQQEGENDLPSTASREILFMQLLLLLRKSSLQENLENSASRLNLLLAWLEDHFADEVNWDAVADQFSLSLRTLHRQLKQQTGLTPQRYLNRLRLMKARHLLRHSEASVTDIAYRCGFSDSNHFSTLFRREFNWSPRDIRQGRDGFLQ.

The HTH araC/xylS-type domain occupies 174 to 272; it reads NLLLAWLEDH…NWSPRDIRQG (99 aa). 2 consecutive DNA-binding regions (H-T-H motif) follow at residues 191 to 212 and 239 to 262; these read DAVADQFSLSLRTLHRQLKQQT and VTDIAYRCGFSDSNHFSTLFRREF.

In terms of assembly, binds DNA as a dimer.

It is found in the cytoplasm. Functionally, activates expression of the rhaBAD and rhaT operons. The protein is HTH-type transcriptional activator RhaS of Escherichia coli O127:H6 (strain E2348/69 / EPEC).